A 1167-amino-acid polypeptide reads, in one-letter code: Melanoma receptor tyrosine-protein kinase (1167 aa).

The first 25 residues, 1–25, serve as a signal peptide directing secretion; sequence MEFLRGGAALLQLLLVLSISRCCST. Over 26 to 642 the chain is Extracellular; the sequence is DPDRKVCQGT…GCRGDIVSHS (617 aa). 3 N-linked (GlcNAc...) asparagine glycosylation sites follow: Asn114, Asn144, and Asn201. Intrachain disulfides connect Cys195/Cys204, Cys199/Cys212, Cys220/Cys228, Cys224/Cys236, Cys237/Cys245, Cys241/Cys253, Cys256/Cys265, Cys269/Cys296, Cys300/Cys311, Cys315/Cys330, and Cys333/Cys337. N-linked (GlcNAc...) asparagine glycans are attached at residues Asn356, Asn365, Asn398, Asn417, and Asn501. Disulfide bonds link Cys504-Cys513, Cys508-Cys521, Cys524-Cys533, Cys537-Cys553, Cys556-Cys569, Cys560-Cys577, Cys593-Cys615, Cys618-Cys626, and Cys622-Cys634. N-linked (GlcNAc...) asparagine glycosylation is present at Asn576. A glycan (N-linked (GlcNAc...) asparagine) is linked at Asn621. Residues 643–665 traverse the membrane as a helical segment; sequence SLAVGLVSGLLITVIVALLIVVL. The Cytoplasmic segment spans residues 666–1167; the sequence is LRRRRIKRKR…QGGALYTPVR (502 aa). Residues 710-977 form the Protein kinase domain; sequence FKKDRVLGSG…QMARDPSRYL (268 aa). ATP contacts are provided by residues 716-724 and Lys743; that span reads LGSGAFGTV. Asp835 (proton acceptor) is an active-site residue.

It belongs to the protein kinase superfamily. Tyr protein kinase family. EGF receptor subfamily.

It localises to the membrane. It catalyses the reaction L-tyrosyl-[protein] + ATP = O-phospho-L-tyrosyl-[protein] + ADP + H(+). Its function is as follows. Probable receptor with tyrosine-protein kinase activity. In Xiphophorus maculatus (Southern platyfish), this protein is Melanoma receptor tyrosine-protein kinase (xmrk).